We begin with the raw amino-acid sequence, 150 residues long: MRPVIIHTDGACSGNPGPGGWGAILKFGDTEKELKGGEAHTTNNRMELLAAISALEALTRPCTVDLYTDSQYVKNGIGSWIHNWKRNGWKTADKKPVKNVDLWQRLDAALKSHEVRWHWVKGHAGHDENERADQLARDGLTKHRLKSRIG.

The region spanning 1-141 (MRPVIIHTDG…ADQLARDGLT (141 aa)) is the RNase H type-1 domain. Residues aspartate 9, glutamate 47, aspartate 69, and aspartate 133 each coordinate Mg(2+).

The protein belongs to the RNase H family. In terms of assembly, monomer. Mg(2+) is required as a cofactor.

It is found in the cytoplasm. The catalysed reaction is Endonucleolytic cleavage to 5'-phosphomonoester.. Functionally, endonuclease that specifically degrades the RNA of RNA-DNA hybrids. In Rhodopseudomonas palustris (strain BisB5), this protein is Ribonuclease H.